Here is a 381-residue protein sequence, read N- to C-terminus: MDAAHWHQGLGLVKPMEEMLMGANPNPNGSSNQPPPPPSSAASAQRPIAPPAAGAAAGAGAAGAGAGTERRARPQKEKALNCPRCNSTNTKFCYYNNYSLQQPRYFCKTCRRYWTEGGSLRNVPVGGGSRKNKRSSSSVVPSAAASASTSAAVSGSVPVGLAAKNPKLMHEGAQDLNLAFPHHHGRALQPPEFTAFPSLESSSVCNPGGNLAAANGAGGRGSVGAFSAMELLRSTGCYVPLPQMAPLGMPAEYAAAGFHLGEFRMPPPPQQQQQQQAQTVLGFSLDTHGAGAGGGSGVFGACSAGLQESAAGRLLFPFEDLKPVVSAAAGDANSGGDHQYDHGKNQGGGGGVIGGHEAPGFWNSSMIGNGSSNGGGGGGSW.

Positions Met19–Asn81 are disordered. 2 stretches are compositionally biased toward low complexity: residues Ala23 to Asn32 and Ser40 to Ala59. Residues Thr68–Ala79 show a composition bias toward basic and acidic residues. Residues Leu80–Arg134 form a Dof-type zinc finger. Zn(2+) contacts are provided by Cys82, Cys85, Cys107, and Cys110. Residues Ala329–Gly349 form a disordered region.

The protein resides in the nucleus. Functionally, transcription factor that may transactivate seed storage protein genes in developing seeds. This is Dof zinc finger protein 2 from Oryza sativa subsp. japonica (Rice).